A 239-amino-acid chain; its full sequence is Large ribosomal subunit protein uL1 (239 aa).

It belongs to the universal ribosomal protein uL1 family. In terms of assembly, part of the 50S ribosomal subunit.

In terms of biological role, binds directly to 23S rRNA. The L1 stalk is quite mobile in the ribosome, and is involved in E site tRNA release. Its function is as follows. Protein L1 is also a translational repressor protein, it controls the translation of the L11 operon by binding to its mRNA. This chain is Large ribosomal subunit protein uL1, found in Rickettsia canadensis (strain McKiel).